The primary structure comprises 432 residues: Ornithine decarboxylase (432 aa).

K98 is subject to N6-(pyridoxal phosphate)lysine. Pyridoxal 5'-phosphate is bound by residues S229, G266, and 296–299 (EPGR). 341–342 (FD) provides a ligand contact to substrate. Residue C377 is the Proton donor; shared with dimeric partner of the active site. D378 serves as a coordination point for substrate. A pyridoxal 5'-phosphate-binding site is contributed by Y407.

Belongs to the Orn/Lys/Arg decarboxylase class-II family. Homodimer. Only the dimer is catalytically active, as the active sites are constructed of residues from both monomers. Pyridoxal 5'-phosphate serves as cofactor.

The protein localises to the cytoplasm. It catalyses the reaction L-ornithine + H(+) = putrescine + CO2. It functions in the pathway amine and polyamine biosynthesis; putrescine biosynthesis via L-ornithine pathway; putrescine from L-ornithine: step 1/1. Inhibited by antizyme (AZ) OAZ1 in response to polyamine levels. AZ inhibits the assembly of the functional homodimer by binding to ODC monomers and targeting them for ubiquitin-independent proteolytic destruction by the 26S proteasome. Functionally, catalyzes the first and rate-limiting step of polyamine biosynthesis that converts ornithine into putrescine, which is the precursor for the polyamines, spermidine and spermine. Polyamines are essential for cell proliferation and are implicated in cellular processes, ranging from DNA replication to apoptosis. In Schizosaccharomyces pombe (strain 972 / ATCC 24843) (Fission yeast), this protein is Ornithine decarboxylase (spe1).